Reading from the N-terminus, the 557-residue chain is Dihydroxy-acid dehydratase (557 aa).

Cys50 is a binding site for [2Fe-2S] cluster. Asp82 contributes to the Mg(2+) binding site. Cys123 contacts [2Fe-2S] cluster. Mg(2+) contacts are provided by Asp124 and Lys125. An N6-carboxylysine modification is found at Lys125. Position 195 (Cys195) interacts with [2Fe-2S] cluster. Glu447 serves as a coordination point for Mg(2+). Ser473 functions as the Proton acceptor in the catalytic mechanism.

The protein belongs to the IlvD/Edd family. Homodimer. [2Fe-2S] cluster is required as a cofactor. Mg(2+) serves as cofactor.

The catalysed reaction is (2R)-2,3-dihydroxy-3-methylbutanoate = 3-methyl-2-oxobutanoate + H2O. It catalyses the reaction (2R,3R)-2,3-dihydroxy-3-methylpentanoate = (S)-3-methyl-2-oxopentanoate + H2O. Its pathway is amino-acid biosynthesis; L-isoleucine biosynthesis; L-isoleucine from 2-oxobutanoate: step 3/4. It participates in amino-acid biosynthesis; L-valine biosynthesis; L-valine from pyruvate: step 3/4. Functionally, functions in the biosynthesis of branched-chain amino acids. Catalyzes the dehydration of (2R,3R)-2,3-dihydroxy-3-methylpentanoate (2,3-dihydroxy-3-methylvalerate) into 2-oxo-3-methylpentanoate (2-oxo-3-methylvalerate) and of (2R)-2,3-dihydroxy-3-methylbutanoate (2,3-dihydroxyisovalerate) into 2-oxo-3-methylbutanoate (2-oxoisovalerate), the penultimate precursor to L-isoleucine and L-valine, respectively. This is Dihydroxy-acid dehydratase from Nitrosospira multiformis (strain ATCC 25196 / NCIMB 11849 / C 71).